Here is a 551-residue protein sequence, read N- to C-terminus: DNA ligase (551 aa).

An ATP-binding site is contributed by Glu-246. Lys-248 serves as the catalytic N6-AMP-lysine intermediate. ATP is bound by residues Arg-253, Arg-268, Glu-298, Phe-337, Arg-414, and Lys-420.

It belongs to the ATP-dependent DNA ligase family. The cofactor is Mg(2+).

It catalyses the reaction ATP + (deoxyribonucleotide)n-3'-hydroxyl + 5'-phospho-(deoxyribonucleotide)m = (deoxyribonucleotide)n+m + AMP + diphosphate.. DNA ligase that seals nicks in double-stranded DNA during DNA replication, DNA recombination and DNA repair. This chain is DNA ligase, found in Methanobrevibacter smithii (strain ATCC 35061 / DSM 861 / OCM 144 / PS).